The following is a 146-amino-acid chain: Snaclec mamushigin subunit beta (146 aa).

The N-terminal stretch at 1–23 (MGRFIFLSFGLLVVFVSLSGTGA) is a signal peptide. Intrachain disulfides connect C25–C36, C53–C142, and C119–C134. Positions 32 to 143 (YEGHCYRVFQ…CSRTYNVVCK (112 aa)) constitute a C-type lectin domain.

As to quaternary structure, heterodimer of subunits alpha and beta; disulfide-linked. Expressed by the venom gland.

The protein localises to the secreted. Its function is as follows. Binds to platelet GPIbalpha (GP1BA) and enhances platelet aggregation at low-shear stress. At high-shear stress, blocks platelet aggregation in a dose-dependent manner. The sequence is that of Snaclec mamushigin subunit beta from Gloydius blomhoffii (Mamushi).